The chain runs to 403 residues: S-adenosylmethionine synthase (403 aa).

H17 lines the ATP pocket. D19 serves as a coordination point for Mg(2+). K(+) is bound at residue E45. Residues E58 and Q104 each coordinate L-methionine. A flexible loop region spans residues 104-114 (QSPDIAQGVDT). ATP-binding positions include 179–181 (DGK), 250–251 (KF), D259, 265–266 (RK), A282, and K286. L-methionine is bound at residue D259. Position 290 (K290) interacts with L-methionine.

The protein belongs to the AdoMet synthase family. As to quaternary structure, homotetramer; dimer of dimers. Mg(2+) is required as a cofactor. K(+) serves as cofactor.

It is found in the cytoplasm. The enzyme catalyses L-methionine + ATP + H2O = S-adenosyl-L-methionine + phosphate + diphosphate. Its pathway is amino-acid biosynthesis; S-adenosyl-L-methionine biosynthesis; S-adenosyl-L-methionine from L-methionine: step 1/1. In terms of biological role, catalyzes the formation of S-adenosylmethionine (AdoMet) from methionine and ATP. The overall synthetic reaction is composed of two sequential steps, AdoMet formation and the subsequent tripolyphosphate hydrolysis which occurs prior to release of AdoMet from the enzyme. In Mycobacterium bovis (strain BCG / Pasteur 1173P2), this protein is S-adenosylmethionine synthase.